We begin with the raw amino-acid sequence, 128 residues long: uncharacterized protein (128 aa).

3 helical membrane-spanning segments follow: residues 1–21, 51–71, and 76–96; these read MLVFSFLFVVVSINLNALIFL, VRVEAIAPFMMCLGSLGAILG, and ANFLLLSYNVINNPVVLVYYV.

The protein resides in the membrane. This is an uncharacterized protein from Saccharomyces cerevisiae (strain ATCC 204508 / S288c) (Baker's yeast).